We begin with the raw amino-acid sequence, 547 residues long: Chaperonin GroEL (547 aa).

ATP is bound by residues 30-33, K51, 87-91, G415, 479-481, and D495; these read TLGP, DGTTT, and NAA.

This sequence belongs to the chaperonin (HSP60) family. Forms a cylinder of 14 subunits composed of two heptameric rings stacked back-to-back. Interacts with the co-chaperonin GroES.

The protein resides in the cytoplasm. The enzyme catalyses ATP + H2O + a folded polypeptide = ADP + phosphate + an unfolded polypeptide.. Together with its co-chaperonin GroES, plays an essential role in assisting protein folding. The GroEL-GroES system forms a nano-cage that allows encapsulation of the non-native substrate proteins and provides a physical environment optimized to promote and accelerate protein folding. The protein is Chaperonin GroEL of Pseudomonas aeruginosa (strain UCBPP-PA14).